Here is a 376-residue protein sequence, read N- to C-terminus: Homeobox protein extradenticle (376 aa).

The tract at residues 16 to 35 (APQGYSLSGQDDGQNTGNEN) is disordered. A compositionally biased stretch (polar residues) spans 20–34 (YSLSGQDDGQNTGNE). The region spanning 38–237 (RKQKDIGEIL…VMILRSRFLD (200 aa)) is the PBC domain. Residues 45-124 (EILQQIMSIS…EGVAGPEKGG (80 aa)) are PBC-A. Residues 127–237 (AAAASAAAAS…VMILRSRFLD (111 aa)) are PBC-B. Positions 238–300 (ARRKRRNFSK…NKRIRYKKNI (63 aa)) form a DNA-binding region, homeobox; TALE-type. Low complexity predominate over residues 318–335 (ASPYSMAGPPSGTTTPMM). A disordered region spans residues 318–376 (ASPYSMAGPPSGTTTPMMSPAPPQDSMGYTMGSGGYDQQQPYDNSMGGYDPNLHQDLSP).

This sequence belongs to the TALE/PBX homeobox family. Interacts with Ubx and hth.

It localises to the nucleus. In terms of biological role, transcription factor which acts with the selector homeodomain proteins altering the regulation of downstream target genes such as wingless (wg), teashirt (tsh) and decapentaplegic (dpp), thus affecting segmental identity. Delimits the eye field and prevent inappropriate eye development. Required for proper localization of chordotonal organs within the peripheral nervous system. The sequence is that of Homeobox protein extradenticle from Drosophila pseudoobscura pseudoobscura (Fruit fly).